A 35-amino-acid polypeptide reads, in one-letter code: Beta-theraphotoxin-Hlv1a (35 aa).

Intrachain disulfides connect Cys2–Cys17, Cys9–Cys24, and Cys16–Cys31.

This sequence belongs to the neurotoxin 10 (Hwtx-1) family. 10 (haplotoxin-1) subfamily. Expressed by the venom gland.

The protein localises to the secreted. Its function is as follows. Spider venom neurotoxin that blocks voltage-gated sodium channel Nav1.3/SCN3A in human (IC(50)=1 uM) and rat (IC(50)=1 uM). This chain is Beta-theraphotoxin-Hlv1a, found in Cyriopagopus lividus (Cobalt blue tarantula).